A 91-amino-acid polypeptide reads, in one-letter code: uncharacterized protein (91 aa).

3 helical membrane-spanning segments follow: residues 9-29 (LIHA…YTAG), 30-50 (LGIF…VIFG), and 67-87 (WLGC…VLKF).

Its subcellular location is the cell membrane. This is an uncharacterized protein from Methanocaldococcus jannaschii (strain ATCC 43067 / DSM 2661 / JAL-1 / JCM 10045 / NBRC 100440) (Methanococcus jannaschii).